A 177-amino-acid chain; its full sequence is Peptide methionine sulfoxide reductase MsrA 2 (177 aa).

The active site involves Cys12.

Belongs to the MsrA Met sulfoxide reductase family.

The enzyme catalyses L-methionyl-[protein] + [thioredoxin]-disulfide + H2O = L-methionyl-(S)-S-oxide-[protein] + [thioredoxin]-dithiol. The catalysed reaction is [thioredoxin]-disulfide + L-methionine + H2O = L-methionine (S)-S-oxide + [thioredoxin]-dithiol. Functionally, has an important function as a repair enzyme for proteins that have been inactivated by oxidation. Catalyzes the reversible oxidation-reduction of methionine sulfoxide in proteins to methionine. The polypeptide is Peptide methionine sulfoxide reductase MsrA 2 (msrA2) (Staphylococcus aureus (strain NCTC 8325 / PS 47)).